The sequence spans 588 residues: WD repeat-containing protein DDB_G0349043 (588 aa).

The disordered stretch occupies residues Met-1–His-32. In terms of domain architecture, LisH spans Asn-40–Leu-72. The CTLH domain maps to Gln-73–Glu-129. WD repeat units follow at residues Lys-244–Pro-283, Gly-294–Thr-333, and Lys-336–Ser-375. Positions Asn-376–Asn-403 are disordered. WD repeat units follow at residues Trp-413–Val-452, Met-455–Lys-494, Lys-499–Thr-539, and Arg-542–Ile-582.

The chain is WD repeat-containing protein DDB_G0349043 from Dictyostelium discoideum (Social amoeba).